The sequence spans 201 residues: Ribonuclease HII (201 aa).

The region spanning 10–200 (LIEAGCDEAG…LGTDPQLEIP (191 aa)) is the RNase H type-2 domain. Positions 16, 17, and 108 each coordinate a divalent metal cation.

Belongs to the RNase HII family. Requires Mn(2+) as cofactor. Mg(2+) serves as cofactor.

The protein localises to the cytoplasm. The enzyme catalyses Endonucleolytic cleavage to 5'-phosphomonoester.. Functionally, endonuclease that specifically degrades the RNA of RNA-DNA hybrids. This Phocaeicola vulgatus (strain ATCC 8482 / DSM 1447 / JCM 5826 / CCUG 4940 / NBRC 14291 / NCTC 11154) (Bacteroides vulgatus) protein is Ribonuclease HII.